A 111-amino-acid polypeptide reads, in one-letter code: Nucleoid-associated protein PputGB1_3833 (111 aa).

2 disordered regions span residues 1-25 and 87-111; these read MMKG…KMQE and EQSS…KMPF.

Belongs to the YbaB/EbfC family. In terms of assembly, homodimer.

The protein localises to the cytoplasm. Its subcellular location is the nucleoid. Functionally, binds to DNA and alters its conformation. May be involved in regulation of gene expression, nucleoid organization and DNA protection. The sequence is that of Nucleoid-associated protein PputGB1_3833 from Pseudomonas putida (strain GB-1).